The primary structure comprises 220 residues: Pyrrolidone-carboxylate peptidase 1 (220 aa).

Residues E80, C143, and H172 contribute to the active site.

This sequence belongs to the peptidase C15 family. As to quaternary structure, homotetramer.

Its subcellular location is the cytoplasm. The enzyme catalyses Release of an N-terminal pyroglutamyl group from a polypeptide, the second amino acid generally not being Pro.. In terms of biological role, removes 5-oxoproline from various penultimate amino acid residues except L-proline. This chain is Pyrrolidone-carboxylate peptidase 1, found in Photorhabdus laumondii subsp. laumondii (strain DSM 15139 / CIP 105565 / TT01) (Photorhabdus luminescens subsp. laumondii).